The following is a 48-amino-acid chain: uncharacterized protein (48 aa).

Residues 25–47 (TFASIGVTVGVQIVILLIWGLSW) traverse the membrane as a helical segment.

Its subcellular location is the membrane. This is an uncharacterized protein from Archaeoglobus fulgidus (strain ATCC 49558 / DSM 4304 / JCM 9628 / NBRC 100126 / VC-16).